A 141-amino-acid polypeptide reads, in one-letter code: 4-hydroxybenzoyl-CoA thioesterase (141 aa).

Asp-17 is an active-site residue. Substrate is bound by residues Trp-47, 59–61 (TPI), and Lys-90.

This sequence belongs to the 4-hydroxybenzoyl-CoA thioesterase family. As to quaternary structure, homotetramer.

The catalysed reaction is 4-hydroxybenzoyl-CoA + H2O = 4-hydroxybenzoate + CoA + H(+). It participates in xenobiotic degradation; 4-chlorobenzoate degradation; 4-hydroxybenzoate from 4-chlorobenzoate: step 3/3. Its activity is regulated as follows. Unaffected by EDTA, Mg(2+), Mn(2+), Fe(2+), Ca(2+), Co(2+) and Zn(2+). In terms of biological role, hydrolyzes 4-hydroxybenzoate-CoA, and to a lesser extent benzoyl-CoA and 4-chlorobenzoate-CoA. Not active against aliphatic acyl-CoA thioesters, including palmitoyl-CoA, hexanoyl-CoA and acetyl-CoA. This Pseudomonas sp. (strain CBS-3) protein is 4-hydroxybenzoyl-CoA thioesterase.